The primary structure comprises 56 residues: Photosystem II reaction center protein K (56 aa).

A propeptide spanning residues 1–19 is cleaved from the precursor; it reads MFNIFLDDAFIHSNNPFFG. The helical transmembrane segment at 35–55 threads the bilayer; that stretch reads MPIIPVLSFLLAFVWQAAVSF.

It belongs to the PsbK family. PSII is composed of 1 copy each of membrane proteins PsbA, PsbB, PsbC, PsbD, PsbE, PsbF, PsbH, PsbI, PsbJ, PsbK, PsbL, PsbM, PsbT, PsbX, PsbY, PsbZ, Psb30/Ycf12, at least 3 peripheral proteins of the oxygen-evolving complex and a large number of cofactors. It forms dimeric complexes.

It localises to the plastid. It is found in the chloroplast thylakoid membrane. Functionally, one of the components of the core complex of photosystem II (PSII). PSII is a light-driven water:plastoquinone oxidoreductase that uses light energy to abstract electrons from H(2)O, generating O(2) and a proton gradient subsequently used for ATP formation. It consists of a core antenna complex that captures photons, and an electron transfer chain that converts photonic excitation into a charge separation. This chain is Photosystem II reaction center protein K, found in Pinus thunbergii (Japanese black pine).